The primary structure comprises 215 residues: MASGRWASPGPAWASRRPLQAQVVLKSASPGPAPASQQASSFGSAPAQLPPAFVDPELSPAMLLSPTCLPVACTGPGLAGEQPLQAPLLPPRGISRPSSGLTAASRDQVPACLPAACVRPSSSVTVACSGPTHASGTLSRGVSPCLTLASLTLREFSVGPCLTLASLTLREVSMSPCLTLVSLTLRAILPHAGLLRPSSCLCWPFQAQPLPVGGL.

Residues L25–Q48 are disordered. The segment covering S27–A47 has biased composition (low complexity).

This is an uncharacterized protein from Homo sapiens (Human).